The chain runs to 137 residues: Phosphoribosyl-AMP cyclohydrolase (137 aa).

D84 contributes to the Mg(2+) binding site. C85 is a Zn(2+) binding site. 2 residues coordinate Mg(2+): D86 and D88. Zn(2+)-binding residues include C101 and C108.

Belongs to the PRA-CH family. In terms of assembly, homodimer. The cofactor is Mg(2+). It depends on Zn(2+) as a cofactor.

It localises to the cytoplasm. It carries out the reaction 1-(5-phospho-beta-D-ribosyl)-5'-AMP + H2O = 1-(5-phospho-beta-D-ribosyl)-5-[(5-phospho-beta-D-ribosylamino)methylideneamino]imidazole-4-carboxamide. It participates in amino-acid biosynthesis; L-histidine biosynthesis; L-histidine from 5-phospho-alpha-D-ribose 1-diphosphate: step 3/9. Its function is as follows. Catalyzes the hydrolysis of the adenine ring of phosphoribosyl-AMP. This Chlorobaculum tepidum (strain ATCC 49652 / DSM 12025 / NBRC 103806 / TLS) (Chlorobium tepidum) protein is Phosphoribosyl-AMP cyclohydrolase.